Reading from the N-terminus, the 1226-residue chain is Arf guanine nucleotide exchange factor SYT1 (1226 aa).

2 disordered regions span residues His-17–Arg-39 and Arg-113–Lys-158. The segment covering Ser-131–Arg-142 has biased composition (basic and acidic residues). Position 277 is a phosphothreonine (Thr-277). 3 disordered regions span residues Asn-311–Ser-405, Ser-954–Tyr-1022, and Leu-1178–Asp-1198. Residues Leu-349–Val-360 show a composition bias toward polar residues. Ser-369 is modified (phosphoserine). Residues Gly-386–Ser-405 show a composition bias toward polar residues. An SEC7 domain is found at Ser-405–Lys-620. In terms of domain architecture, PH spans Ile-844–Asp-1074. 2 stretches are compositionally biased toward low complexity: residues Gly-956–Ala-969 and Ser-994–Asp-1017.

It localises to the cytoplasm. With respect to regulation, inhibited by brefeldin A. Guanine nucleotide exchange factor for Arf GTPases, stimulating the nucleotide exchange from the GDP-bound to the GTP-bound form. Catalyzes both the GDP release by and the GTP binding to ARF2. Has no exchange activity on Rab GTPases. Involved in vesicular transport. The polypeptide is Arf guanine nucleotide exchange factor SYT1 (SYT1) (Saccharomyces cerevisiae (strain ATCC 204508 / S288c) (Baker's yeast)).